Reading from the N-terminus, the 226-residue chain is SPI-1 type 3 secretion system stator protein (226 aa).

The core secretion machinery of the T3SS is composed of approximately 20 different proteins, including cytoplasmic components, a base, an export apparatus and a needle. This subunit is part of the cytosolic complex. Interacts directly with InvC/SctN1 (T3SS-1 ATPase) and SpaO/SctQ (the major sorting platform component).

It is found in the cytoplasm. In terms of biological role, component of the type III secretion system (T3SS), also called injectisome, which is used to inject bacterial effector proteins into eukaryotic host cells. Acts as a regulator of the InvC/SctN1 ATPase activity. Required for invasion and secretion. The protein is SPI-1 type 3 secretion system stator protein of Salmonella typhimurium (strain SL1344).